The chain runs to 334 residues: Ribosomal RNA small subunit methyltransferase H (334 aa).

S-adenosyl-L-methionine is bound by residues 54 to 56 (GGH), Asp-74, Phe-100, Asp-121, and Gln-128. Residues 272–318 (RHSKGQYPEDENLPMPPKRPRYFSKPKRVGPSKAEISNNPRSRSAWL) are disordered. A compositionally biased stretch (basic residues) spans 289-301 (KRPRYFSKPKRVG).

The protein belongs to the methyltransferase superfamily. RsmH family.

It localises to the cytoplasm. The enzyme catalyses cytidine(1402) in 16S rRNA + S-adenosyl-L-methionine = N(4)-methylcytidine(1402) in 16S rRNA + S-adenosyl-L-homocysteine + H(+). Its function is as follows. Specifically methylates the N4 position of cytidine in position 1402 (C1402) of 16S rRNA. The protein is Ribosomal RNA small subunit methyltransferase H of Psychrobacter arcticus (strain DSM 17307 / VKM B-2377 / 273-4).